A 260-amino-acid polypeptide reads, in one-letter code: uncharacterized protein (260 aa).

The Radical SAM core domain maps to 6–239 (AGVRSGVVVS…VAVAETYLPN (234 aa)).

This is an uncharacterized protein from Sinorhizobium fredii (strain NBRC 101917 / NGR234).